Consider the following 416-residue polypeptide: E3 ubiquitin-protein ligase RNFT1 (416 aa).

Disordered regions lie at residues 1–50 and 68–117; these read MKHR…MSLP and DLSS…DSRE. Residues 7–19 are compositionally biased toward basic and acidic residues; it reads HERQSSTESKNLK. 2 stretches are compositionally biased toward polar residues: residues 20-45 and 68-80; these read ETTQLIMQSSSDHTHHQLGSNDSPSA and DLSSQDSQHVARS. A compositionally biased stretch (basic residues) spans 81–100; the sequence is NSRRVRPSTHGRSPSRHGHT. 6 helical membrane-spanning segments follow: residues 146–166, 184–204, 214–234, 237–257, 265–287, and 302–322; these read LVVQHITGISVGIGLLTTFLY, LQCLWVLVFLLFSSFLLYYTF, VFMNPSLGPLHFFDALWVVGI, FIGKFFFMGLKCIILLVPSFV, YWYMALEELAQCYCTLVSTPVWF, and WHFGILLALLYLILKILIIFG. A required for ubiquitin ligase activity and for protection against ER stress-induced cell death region spans residues 349-400; it reads CSEADGMCAICQAEFTKPIALICQHVFCEECISSWFNKEKTCPLCRTLISNH. The RING-type zinc finger occupies 356-394; that stretch reads CAICQAEFTKPIALICQHVFCEECISSWFNKEKTCPLCR.

Its subcellular location is the endoplasmic reticulum membrane. The enzyme catalyses S-ubiquitinyl-[E2 ubiquitin-conjugating enzyme]-L-cysteine + [acceptor protein]-L-lysine = [E2 ubiquitin-conjugating enzyme]-L-cysteine + N(6)-ubiquitinyl-[acceptor protein]-L-lysine.. It participates in protein modification; protein ubiquitination. Its function is as follows. E3 ubiquitin-protein ligase that acts in the endoplasmic reticulum (ER)-associated degradation (ERAD) pathway, which targets misfolded proteins that accumulate in the endoplasmic reticulum (ER) for ubiquitination and subsequent proteasome-mediated degradation. Protects cells from ER stress-induced apoptosis. This chain is E3 ubiquitin-protein ligase RNFT1 (rnft1), found in Xenopus laevis (African clawed frog).